The primary structure comprises 275 residues: Biotin synthase (275 aa).

The Radical SAM core domain maps to 1-217 (MLCAICNVSS…DTAKTLPQCR (217 aa)). Residues cysteine 13, cysteine 17, and cysteine 20 each coordinate [4Fe-4S] cluster. [2Fe-2S] cluster is bound by residues cysteine 57, cysteine 92, cysteine 150, and arginine 217.

It belongs to the radical SAM superfamily. Biotin synthase family. As to quaternary structure, homodimer. [4Fe-4S] cluster serves as cofactor. It depends on [2Fe-2S] cluster as a cofactor.

It carries out the reaction (4R,5S)-dethiobiotin + (sulfur carrier)-SH + 2 reduced [2Fe-2S]-[ferredoxin] + 2 S-adenosyl-L-methionine = (sulfur carrier)-H + biotin + 2 5'-deoxyadenosine + 2 L-methionine + 2 oxidized [2Fe-2S]-[ferredoxin]. The protein operates within cofactor biosynthesis; biotin biosynthesis; biotin from 7,8-diaminononanoate: step 2/2. Its function is as follows. Catalyzes the conversion of dethiobiotin (DTB) to biotin by the insertion of a sulfur atom into dethiobiotin via a radical-based mechanism. This Campylobacter fetus subsp. fetus (strain 82-40) protein is Biotin synthase.